A 409-amino-acid chain; its full sequence is Histidine--tRNA ligase (409 aa).

It belongs to the class-II aminoacyl-tRNA synthetase family.

It localises to the cytoplasm. The catalysed reaction is tRNA(His) + L-histidine + ATP = L-histidyl-tRNA(His) + AMP + diphosphate + H(+). In Methanosphaerula palustris (strain ATCC BAA-1556 / DSM 19958 / E1-9c), this protein is Histidine--tRNA ligase.